A 224-amino-acid chain; its full sequence is Protein FAM3D (224 aa).

The signal sequence occupies residues 1–25 (MRVSGVLRLLALIFAIVTTWMFIRS). Intrachain disulfides connect Cys55/Cys83 and Cys61/Cys218. In terms of domain architecture, GG-type lectin spans 64–222 (NYFAFKICSG…LEMEGCMPPK (159 aa)). Asn107 carries an N-linked (GlcNAc...) asparagine glycan.

Belongs to the FAM3 family. As to expression, abundantly expressed in placenta and weakly expressed in small intestine.

The protein localises to the secreted. This Homo sapiens (Human) protein is Protein FAM3D (FAM3D).